Reading from the N-terminus, the 831-residue chain is MTISRRDLLKAQAAGIAAMAANIPLSSQAPAVPGGVESLQITWSKAPCRFCGTGCGVMVGVKEGRVVATHGDLLAEVNRGLNCVKGYFLSKIMYGADRLTQPLLRKKDGVYAKDGEFTPVSWEEAFDTMAAQAKRVLRDKGPTALGMFGSGQWTIFEGYAATKLMRAGFRSNNLDPNARHCMASAAYAFMRTFGMDEPMGCYDDFEAADAFVLWGSNMAEMHPILWTRVADRRLGHPHVKVAVLSTFTHRSSDLADIPIVFKPGTDLAILNYIANHIIQTGRVNRDFVDRHTTFVAGATGIGYGLRDDDPREMAARTAEDPAATTPSTFEEFAELVSEYTLDKVSELSGVEPAFLEQLAELYADPDRKVMSLWTMGFNQHVRGVWANQMVYNLHLLTGKISEPGNSPFSLTGQASACGTARQVGTFRHRLPSDMTVTNPERRQDAEEIWRIPHGVIPEQPGLHAVAQDRALHDGTLNFYWIQVNNNLQASPNNDGEAWPGYRNPDNFIVVSDAYPTVTALAADLILPAAMWVEKEGAYGNAERRTHVWHQLVEAPGEARSDLWQMMEFSTRFTTDEVWPEEILAANPNYRGQSLFDVLFRNGSVDRFDLSELNPVTPTAESNAFGFYVQKGLFEEYAPFGRGHGHDLAPYDTYHEVRGLRWPVVDGKETLWRYREGLDPYVEPGAGVQFYGNPDGKARIIAVPYEPPAEPPDEEYNIWLVTGRVLEHWHSGSMTMRVPELYRAFPGARCFMNPEDARDMGFNQGAEVRIVSRRGEIRSRVETRGRNRMPRGVVFVPWFDASQLINKVTLDATDPISKQTDFKKCAVKILPV.

Residues 1-31 (MTISRRDLLKAQAAGIAAMAANIPLSSQAPA) constitute a signal peptide (tat-type signal). The region spanning 41–97 (ITWSKAPCRFCGTGCGVMVGVKEGRVVATHGDLLAEVNRGLNCVKGYFLSKIMYGAD) is the 4Fe-4S Mo/W bis-MGD-type domain. [4Fe-4S] cluster is bound by residues Cys-48, Cys-51, Cys-55, and Cys-83. Mo-bis(molybdopterin guanine dinucleotide) contacts are provided by residues Lys-85, Gln-152, Asn-177, Cys-181, 214–221 (WGSNMAEM), 245–249 (STFTH), 264–266 (GTD), Met-375, Gln-379, Asn-485, 511–512 (SD), Lys-534, Asp-561, and 721–730 (TGRVLEHWHS). Trp-797 contacts substrate. Residues Asn-805 and Lys-822 each contribute to the Mo-bis(molybdopterin guanine dinucleotide) site.

It belongs to the prokaryotic molybdopterin-containing oxidoreductase family. NasA/NapA/NarB subfamily. In terms of assembly, component of the periplasmic nitrate reductase NapAB complex composed of NapA and NapB. [4Fe-4S] cluster is required as a cofactor. The cofactor is Mo-bis(molybdopterin guanine dinucleotide). In terms of processing, predicted to be exported by the Tat system. The position of the signal peptide cleavage has not been experimentally proven.

The protein resides in the periplasm. It carries out the reaction 2 Fe(II)-[cytochrome] + nitrate + 2 H(+) = 2 Fe(III)-[cytochrome] + nitrite + H2O. Functionally, catalytic subunit of the periplasmic nitrate reductase complex NapAB. Receives electrons from NapB and catalyzes the reduction of nitrate to nitrite. This Paracoccus pantotrophus (Thiosphaera pantotropha) protein is Periplasmic nitrate reductase.